The primary structure comprises 249 residues: tRNA pseudouridine synthase A (249 aa).

Residue Asp-53 is the Nucleophile of the active site. Tyr-111 provides a ligand contact to substrate.

The protein belongs to the tRNA pseudouridine synthase TruA family. As to quaternary structure, homodimer.

The catalysed reaction is uridine(38/39/40) in tRNA = pseudouridine(38/39/40) in tRNA. In terms of biological role, formation of pseudouridine at positions 38, 39 and 40 in the anticodon stem and loop of transfer RNAs. The polypeptide is tRNA pseudouridine synthase A (Streptococcus pneumoniae serotype 2 (strain D39 / NCTC 7466)).